A 339-amino-acid chain; its full sequence is Anthranilate phosphoribosyltransferase (339 aa).

Residues G80, 83 to 84, T88, 90 to 93, 108 to 116, and S120 contribute to the 5-phospho-alpha-D-ribose 1-diphosphate site; these read GD, NIST, and KHGNRSVSS. G80 provides a ligand contact to anthranilate. S92 is a Mg(2+) binding site. N111 is an anthranilate binding site. An anthranilate-binding site is contributed by R166. Residues D225 and E226 each contribute to the Mg(2+) site.

It belongs to the anthranilate phosphoribosyltransferase family. Homodimer. Mg(2+) serves as cofactor.

It catalyses the reaction N-(5-phospho-beta-D-ribosyl)anthranilate + diphosphate = 5-phospho-alpha-D-ribose 1-diphosphate + anthranilate. It participates in amino-acid biosynthesis; L-tryptophan biosynthesis; L-tryptophan from chorismate: step 2/5. Its function is as follows. Catalyzes the transfer of the phosphoribosyl group of 5-phosphorylribose-1-pyrophosphate (PRPP) to anthranilate to yield N-(5'-phosphoribosyl)-anthranilate (PRA). The sequence is that of Anthranilate phosphoribosyltransferase from Alkaliphilus metalliredigens (strain QYMF).